Consider the following 224-residue polypeptide: LexA repressor (224 aa).

Residues 41–61 constitute a DNA-binding region (H-T-H motif); it reads MREIGDAVGLSSLSSVTHQLN. Residues serine 148 and lysine 185 each act as for autocatalytic cleavage activity in the active site.

It belongs to the peptidase S24 family. As to quaternary structure, homodimer.

The enzyme catalyses Hydrolysis of Ala-|-Gly bond in repressor LexA.. Functionally, represses a number of genes involved in the response to DNA damage (SOS response), including recA and lexA. In the presence of single-stranded DNA, RecA interacts with LexA causing an autocatalytic cleavage which disrupts the DNA-binding part of LexA, leading to derepression of the SOS regulon and eventually DNA repair. This chain is LexA repressor, found in Leifsonia xyli subsp. xyli (strain CTCB07).